The primary structure comprises 321 residues: L-carnitine dehydrogenase (321 aa).

14–19 (GSGVIG) serves as a coordination point for NAD(+).

It belongs to the 3-hydroxyacyl-CoA dehydrogenase family. L-carnitine dehydrogenase subfamily. Homodimer.

Its subcellular location is the cytoplasm. The enzyme catalyses carnitine + NAD(+) = 3-dehydrocarnitine + NADH + H(+). It functions in the pathway amine and polyamine metabolism; carnitine metabolism. With respect to regulation, analogs of L-carnitine such as D-carnitine, glycine betaine and choline, are competitive inhibitors of L-carnitine oxidation. Its function is as follows. Catalyzes the NAD(+)-dependent oxidation of L-carnitine to 3-dehydrocarnitine. Is specific for L-carnitine and NAD(+) as substrates. D,L-3-hydroxybutyrate, L-lactate, ethanol, L-malate and D,L-isocitrate are not substrates. Is involved in a L-carnitine degradation pathway that allows P.aeruginosa to grow on L-carnitine as the sole source of carbon and nitrogen. This Pseudomonas aeruginosa (strain ATCC 15692 / DSM 22644 / CIP 104116 / JCM 14847 / LMG 12228 / 1C / PRS 101 / PAO1) protein is L-carnitine dehydrogenase.